Here is a 459-residue protein sequence, read N- to C-terminus: Glutamate--tRNA ligase 2 (459 aa).

Positions 8–18 (PSPTGYIHIGN) match the 'HIGH' region motif. Residues 249 to 253 (GLSKR) carry the 'KMSKS' region motif. An ATP-binding site is contributed by lysine 252.

It belongs to the class-I aminoacyl-tRNA synthetase family. Glutamate--tRNA ligase type 1 subfamily. As to quaternary structure, monomer.

Its subcellular location is the cytoplasm. The catalysed reaction is tRNA(Glu) + L-glutamate + ATP = L-glutamyl-tRNA(Glu) + AMP + diphosphate. Its function is as follows. Catalyzes the attachment of glutamate to tRNA(Glu) in a two-step reaction: glutamate is first activated by ATP to form Glu-AMP and then transferred to the acceptor end of tRNA(Glu). This chain is Glutamate--tRNA ligase 2, found in Bartonella henselae (strain ATCC 49882 / DSM 28221 / CCUG 30454 / Houston 1) (Rochalimaea henselae).